Here is a 432-residue protein sequence, read N- to C-terminus: D-amino acid dehydrogenase (432 aa).

Position 3-17 (valine 3–tryptophan 17) interacts with FAD.

The protein belongs to the DadA oxidoreductase family. The cofactor is FAD.

The enzyme catalyses a D-alpha-amino acid + A + H2O = a 2-oxocarboxylate + AH2 + NH4(+). Its pathway is amino-acid degradation; D-alanine degradation; NH(3) and pyruvate from D-alanine: step 1/1. Functionally, oxidative deamination of D-amino acids. This is D-amino acid dehydrogenase from Salmonella dublin (strain CT_02021853).